The sequence spans 297 residues: Homoserine kinase (297 aa).

79 to 89 (PIARGLGSSGA) serves as a coordination point for ATP.

It belongs to the GHMP kinase family. Homoserine kinase subfamily.

Its subcellular location is the cytoplasm. The enzyme catalyses L-homoserine + ATP = O-phospho-L-homoserine + ADP + H(+). Its pathway is amino-acid biosynthesis; L-threonine biosynthesis; L-threonine from L-aspartate: step 4/5. In terms of biological role, catalyzes the ATP-dependent phosphorylation of L-homoserine to L-homoserine phosphate. The polypeptide is Homoserine kinase (Pyrobaculum aerophilum (strain ATCC 51768 / DSM 7523 / JCM 9630 / CIP 104966 / NBRC 100827 / IM2)).